The sequence spans 707 residues: Serine/threonine protein kinase UL97 (707 aa).

Positions 1–14 (MSSALRSRARSASL) are enriched in low complexity. Disordered stretches follow at residues 1 to 33 (MSSA…SRAR), 113 to 146 (DGEK…GDGY), 176 to 198 (FTGG…RPLR), and 231 to 264 (ESQD…EADS). Basic and acidic residues predominate over residues 113 to 127 (DGEKEDAASDKENLR). Positions 178-188 (GGSDPSDSVSG) are enriched in low complexity. ATP-binding positions include 337-345 (LGQGSFGEV) and Lys-359. Residue Asp-456 is the Proton acceptor of the active site.

This sequence belongs to the protein kinase superfamily. Tyr protein kinase family. HCMV ganciclovir subfamily. As to quaternary structure, interacts with UL83. Autophosphorylates on serine and threonine residues.

Its subcellular location is the virion. It carries out the reaction L-seryl-[protein] + ATP = O-phospho-L-seryl-[protein] + ADP + H(+). The catalysed reaction is L-threonyl-[protein] + ATP = O-phospho-L-threonyl-[protein] + ADP + H(+). Functionally, serine/threonine protein kinase that plays important roles in several processes including nuclear viral egress, viral replication or regulation of host cell cycle progression. Participates in the acquisition of tegument during virion morphogenesis in the nucleus. Phosphorylates the viral nuclear egress complex (NEC) subunits UL50 and UL53. Redistributes the host nuclear lamina by phosphorylating cellular Lamins-A/C. Plays a role in viral DNA synthesis by phosphorylating the DNA polymerase processivity factor UL44. Stimulates host cell cycle to support viral DNA synthesis by phosphorylating host retinoblastoma/RB1 protein. Additional substrates have been identified including host EF1D or H2B. Also phosphorylates host SAMHD1 and thereby counteracts its antiviral effect by reducing its dNTP hydrolase activity. The protein is Serine/threonine protein kinase UL97 (UL97) of Human cytomegalovirus (strain AD169) (HHV-5).